Consider the following 164-residue polypeptide: Peptidyl-prolyl cis-trans isomerase A-like 4D (164 aa).

Positions 7-163 constitute a PPIase cyclophilin-type domain; sequence FFEITRDGKP…KKITIADCGQ (157 aa).

The protein belongs to the cyclophilin-type PPIase family. PPIase A subfamily.

The protein resides in the cytoplasm. The catalysed reaction is [protein]-peptidylproline (omega=180) = [protein]-peptidylproline (omega=0). PPIases accelerate the folding of proteins. It catalyzes the cis-trans isomerization of proline imidic peptide bonds in oligopeptides. The chain is Peptidyl-prolyl cis-trans isomerase A-like 4D from Homo sapiens (Human).